The chain runs to 586 residues: Mitochondrial tRNA methylthiotransferase CDK5RAP1 (586 aa).

Residues 1–30 (MHPLQRVFRAQRLSAPLTSMCWVLLRTFRA) constitute a mitochondrion transit peptide. Residues 68-90 (ASVPQEKPSSPEVEDPPPYLSGD) form a disordered region. The MTTase N-terminal domain occupies 97–217 (RKVYLETYGC…LPRLLAVVES (121 aa)). Residues Cys106, Cys142, Cys180, Cys255, Cys259, and Cys262 each coordinate [4Fe-4S] cluster. Residues 241–495 (SPSATSAFVS…ITVFREEASK (255 aa)) enclose the Radical SAM core domain. One can recognise a TRAM domain in the interval 498-573 (ATSVGCTQLV…SQTLKGHILC (76 aa)).

This sequence belongs to the methylthiotransferase family. MiaB subfamily. As to quaternary structure, interacts with CDK5R1 (p35 form). CDK5RAP1, CDK5RAP2 and CDK5RAP3 show competitive binding to CDK5R1. Forms a complex with CDK5R1 and CDK5. [4Fe-4S] cluster serves as cofactor. In terms of tissue distribution, expressed in brain.

It is found in the mitochondrion inner membrane. It carries out the reaction N(6)-dimethylallyladenosine(37) in tRNA + (sulfur carrier)-SH + AH2 + 2 S-adenosyl-L-methionine = 2-methylsulfanyl-N(6)-dimethylallyladenosine(37) in tRNA + (sulfur carrier)-H + 5'-deoxyadenosine + L-methionine + A + S-adenosyl-L-homocysteine + 2 H(+). Its function is as follows. Methylthiotransferase that catalyzes the conversion of N6-(dimethylallyl)adenosine (i(6)A) to 2-methylthio-N6-(dimethylallyl)adenosine (ms(2)i(6)A) at position 37 (adjacent to the 3'-end of the anticodon) of four mitochondrial DNA-encoded tRNAs (Ser(UCN), Phe, Tyr and Trp). Essential for efficient and highly accurate protein translation by the ribosome. Specifically inhibits CDK5 activation by CDK5R1. Essential for efficient mitochondrial protein synthesis and respiratory chain. In Rattus norvegicus (Rat), this protein is Mitochondrial tRNA methylthiotransferase CDK5RAP1 (Cdk5rap1).